The primary structure comprises 199 residues: dITP/XTP pyrophosphatase (199 aa).

8-13 (TSNINK) serves as a coordination point for substrate. Asp-68 functions as the Proton acceptor in the catalytic mechanism. A Mg(2+)-binding site is contributed by Asp-68. Substrate-binding positions include Ser-69, 155-158 (FGYN), Lys-177, and 182-183 (HR).

This sequence belongs to the HAM1 NTPase family. In terms of assembly, homodimer. Mg(2+) serves as cofactor.

The enzyme catalyses XTP + H2O = XMP + diphosphate + H(+). The catalysed reaction is dITP + H2O = dIMP + diphosphate + H(+). It carries out the reaction ITP + H2O = IMP + diphosphate + H(+). Pyrophosphatase that catalyzes the hydrolysis of nucleoside triphosphates to their monophosphate derivatives, with a high preference for the non-canonical purine nucleotides XTP (xanthosine triphosphate), dITP (deoxyinosine triphosphate) and ITP. Seems to function as a house-cleaning enzyme that removes non-canonical purine nucleotides from the nucleotide pool, thus preventing their incorporation into DNA/RNA and avoiding chromosomal lesions. The chain is dITP/XTP pyrophosphatase from Borrelia recurrentis (strain A1).